The sequence spans 486 residues: Serine/threonine-protein kinase 32C (486 aa).

The tract at residues 1 to 56 (MRSGAERRGSSAAASPGSPPPGRARPAGSDAPSALPPPAAGQPRARDSGDVRSQPR) is disordered. Phosphoserine is present on residues Ser-10, Ser-15, and Ser-18. The segment covering 24-33 (ARPAGSDAPS) has biased composition (low complexity). In terms of domain architecture, Protein kinase spans 93–353 (FQILRAIGKG…LQDVQAAPAL (261 aa)). ATP-binding positions include 99 to 107 (IGKGSFGKV) and Lys-122. Catalysis depends on Asp-216, which acts as the Proton acceptor. Over residues 396-405 (HKKKKRLAKN) the composition is skewed to basic residues. Disordered regions lie at residues 396–419 (HKKKKRLAKNKSRDNSRDSSQSEN) and 444–486 (SQDL…AGSG).

The protein belongs to the protein kinase superfamily. Ser/Thr protein kinase family. It depends on Mg(2+) as a cofactor.

The enzyme catalyses L-seryl-[protein] + ATP = O-phospho-L-seryl-[protein] + ADP + H(+). It catalyses the reaction L-threonyl-[protein] + ATP = O-phospho-L-threonyl-[protein] + ADP + H(+). This chain is Serine/threonine-protein kinase 32C, found in Homo sapiens (Human).